Reading from the N-terminus, the 349-residue chain is Divinyl chlorophyll a/b light-harvesting protein PcbB (349 aa).

6 helical membrane-spanning segments follow: residues 27-47 (FIAA…AATL), 57-77 (LPMG…GIGF), 91-113 (IAIL…SVYF), 201-221 (VMGG…FHIA), 241-261 (AILS…AFWA), and 306-326 (LVNV…WHAL).

This sequence belongs to the PsbB/PsbC family. IsiA/Pcb subfamily. As to quaternary structure, the antenna complex consists of divinyl chlorophylls (a and b) and divinyl chlorophyll a/b binding proteins and binds more divinyl chlorophyll b than does the antenna complex from high-light-adapted Prochlorococcus. Requires divinyl chlorophyll a as cofactor. Divinyl chlorophyll b serves as cofactor.

The protein localises to the cellular thylakoid membrane. The antenna complex functions as a light receptor, it captures and delivers excitation energy to photosystems II and I. The Prochlorales pcb genes are not related to higher plant LHCs. This is Divinyl chlorophyll a/b light-harvesting protein PcbB (pcbB) from Prochlorococcus marinus (strain SARG / CCMP1375 / SS120).